The chain runs to 78 residues: Conotoxin ArMKLT2-0313 (78 aa).

Positions 1–22 (MKLTCVLIIAVLCLTVCQLITA) are cleaved as a signal peptide. A propeptide spanning residues 23–47 (DYLRDKQKYRSVRLRDGMLNFKGSR) is cleaved from the precursor. Gln-48 is subject to Pyrrolidone carboxylic acid. 3 disulfide bridges follow: Cys-49/Cys-62, Cys-56/Cys-67, and Cys-61/Cys-75.

This sequence belongs to the conotoxin O1 superfamily. As to expression, expressed by the venom duct.

Its subcellular location is the secreted. The sequence is that of Conotoxin ArMKLT2-0313 from Conus arenatus (Sand-dusted cone).